A 148-amino-acid polypeptide reads, in one-letter code: Protein Turandot Z (148 aa).

The N-terminal stretch at Met1–Ala23 is a signal peptide.

It belongs to the Turandot family.

Its subcellular location is the secreted. Its function is as follows. A humoral factor that may play a role in stress tolerance. The polypeptide is Protein Turandot Z (Drosophila simulans (Fruit fly)).